Here is a 287-residue protein sequence, read N- to C-terminus: Movement protein BC1 (287 aa).

The protein belongs to the begomovirus movement protein BC1 family. In terms of assembly, binds to dimeric supercoiled plasmid DNA. Phosphorylated.

The protein localises to the host cell membrane. It is found in the host microsome membrane. It localises to the host endoplasmic reticulum membrane. In terms of biological role, transports viral genome to neighboring plant cells directly through plasmosdesmata, without any budding. The movement protein allows efficient cell to cell propagation, by bypassing the host cell wall barrier. Begomovirus genome is shuttled out of nucleus by Nuclear shuttle protein (NSP) and the movement protein transports the DNA-NSP complex to cell plasmodesmata and facilitates further movement across the cell wall. The sequence is that of Movement protein BC1 from Manihot esculenta (Cassava).